An 831-amino-acid polypeptide reads, in one-letter code: Glycerol-3-phosphate acyltransferase (831 aa).

The short motif at 304-309 is the HXXXXD motif element; that stretch reads CHRSHM. Positions 801–831 are disordered; that stretch reads VSMPAETSNQPEAPETPETPETPEPEGKTES.

Belongs to the GPAT/DAPAT family.

The protein localises to the cell inner membrane. The catalysed reaction is sn-glycerol 3-phosphate + an acyl-CoA = a 1-acyl-sn-glycero-3-phosphate + CoA. Its pathway is phospholipid metabolism; CDP-diacylglycerol biosynthesis; CDP-diacylglycerol from sn-glycerol 3-phosphate: step 1/3. This Yersinia pseudotuberculosis serotype IB (strain PB1/+) protein is Glycerol-3-phosphate acyltransferase.